An 86-amino-acid polypeptide reads, in one-letter code: Serine protease inhibitor Kazal-type 4 (86 aa).

Positions 1–26 are cleaved as a signal peptide; that stretch reads MAVRLWVVALALAALFIVDREVPVSA. In terms of domain architecture, Kazal-like spans 31–86; that stretch reads FSRMPICEHMTESPDCSRIYDPVCGTDGVTYESECKLCLARIENKQDIQIVKDGEC. 3 disulfides stabilise this stretch: Cys37–Cys68, Cys46–Cys65, and Cys54–Cys86.

In terms of tissue distribution, synthesized in duodenal goblet cells and in monocytes in bone marrow and blood.

It is found in the secreted. Its function is as follows. Inhibits the glucose-induced insulin secretion from perfused pancreas; also plays a role in the immune system. Does not inhibit trypsin. The chain is Serine protease inhibitor Kazal-type 4 (SPINK4) from Sus scrofa (Pig).